Consider the following 305-residue polypeptide: Porphobilinogen deaminase (305 aa).

C238 is modified (S-(dipyrrolylmethanemethyl)cysteine).

Belongs to the HMBS family. Monomer. Dipyrromethane is required as a cofactor.

The catalysed reaction is 4 porphobilinogen + H2O = hydroxymethylbilane + 4 NH4(+). It participates in porphyrin-containing compound metabolism; protoporphyrin-IX biosynthesis; coproporphyrinogen-III from 5-aminolevulinate: step 2/4. Tetrapolymerization of the monopyrrole PBG into the hydroxymethylbilane pre-uroporphyrinogen in several discrete steps. This is Porphobilinogen deaminase from Rubrobacter xylanophilus (strain DSM 9941 / JCM 11954 / NBRC 16129 / PRD-1).